A 449-amino-acid polypeptide reads, in one-letter code: Maltoporin (449 aa).

Positions 1–24 are cleaved as a signal peptide; it reads MITLRKLPLAVAVAAGVMSAQAMA.

Belongs to the porin LamB (TC 1.B.3) family. In terms of assembly, homotrimer formed of three 18-stranded antiparallel beta-barrels, containing three independent channels.

It is found in the cell outer membrane. The enzyme catalyses beta-maltose(in) = beta-maltose(out). In terms of biological role, involved in the transport of maltose and maltodextrins. This Citrobacter koseri (strain ATCC BAA-895 / CDC 4225-83 / SGSC4696) protein is Maltoporin.